A 452-amino-acid polypeptide reads, in one-letter code: MDRRIFGLENEYGVTCTFHGQRRLSPDEVARYLFRRVVSWGRSSNVFLRNGARLYLDVGSHPEYATPECDNLVDLVVHDKAGERTLEGLLVDAEHRLREEGITGDIYLFKNNTDSAGNSYGCHENYLVTRQGEFSRLADVLIPFLVTRQLICGAGKVLATPRGAVYCLSQRAEHIWEGVSSATTRSRPIINTRDEPHADAERFRRLHVIVGDSNMAEPSTLLKVGSTDIVLRMIEAGVVLRDLSLENPIRAIREVSHDPTGRRRIRMANGREASALEIQEEYLSKAQEFLERRGTDAVTKRVLDLWERTLRAVRTGDLSLVDREIDWVIKYRLIEAYRARHDLPLSSPRVAQIDLAYHDVKRTRGLYYLLERKGAVERVAHDVQIFEAKSTPPQTTRARLRGEFIRHAQEKRRDFTVDWVHLKLNDQAQRTVLCKDPFRSVDERVEKLIASM.

Residue Glu-9 coordinates Mg(2+). Position 53 (Arg-53) interacts with ATP. Tyr-55 lines the Mg(2+) pocket. Residue Asp-57 is the Proton acceptor of the active site. Glu-63 lines the Mg(2+) pocket. Residues Thr-66 and Trp-419 each coordinate ATP.

The protein belongs to the Pup ligase/Pup deamidase family. Pup-conjugating enzyme subfamily.

The enzyme catalyses ATP + [prokaryotic ubiquitin-like protein]-L-glutamate + [protein]-L-lysine = ADP + phosphate + N(6)-([prokaryotic ubiquitin-like protein]-gamma-L-glutamyl)-[protein]-L-lysine.. The protein operates within protein degradation; proteasomal Pup-dependent pathway. It functions in the pathway protein modification; protein pupylation. In terms of biological role, catalyzes the covalent attachment of the prokaryotic ubiquitin-like protein modifier Pup to the proteasomal substrate proteins, thereby targeting them for proteasomal degradation. This tagging system is termed pupylation. The ligation reaction involves the side-chain carboxylate of the C-terminal glutamate of Pup and the side-chain amino group of a substrate lysine. This chain is Pup--protein ligase, found in Acidothermus cellulolyticus (strain ATCC 43068 / DSM 8971 / 11B).